We begin with the raw amino-acid sequence, 264 residues long: Indole-3-glycerol phosphate synthase (264 aa).

It belongs to the TrpC family.

It catalyses the reaction 1-(2-carboxyphenylamino)-1-deoxy-D-ribulose 5-phosphate + H(+) = (1S,2R)-1-C-(indol-3-yl)glycerol 3-phosphate + CO2 + H2O. The protein operates within amino-acid biosynthesis; L-tryptophan biosynthesis; L-tryptophan from chorismate: step 4/5. This Carboxydothermus hydrogenoformans (strain ATCC BAA-161 / DSM 6008 / Z-2901) protein is Indole-3-glycerol phosphate synthase.